The following is a 535-amino-acid chain: Probable glucomannan 4-beta-mannosyltransferase 14 (535 aa).

A helical membrane pass occupies residues Gln-42 to Val-62. Asp-131 is an active-site residue. 2 residues coordinate substrate: Asp-193 and Asp-195. Asp-287 is an active-site residue. 4 helical membrane passes run Ile-366 to Phe-386, Ile-403 to Leu-423, Ile-482 to Tyr-502, and Leu-503 to Gly-523.

This sequence belongs to the glycosyltransferase 2 family. Plant cellulose synthase-like A subfamily.

It localises to the golgi apparatus membrane. The catalysed reaction is GDP-mannose + (glucomannan)n = GDP + (glucomannan)n+1.. In terms of biological role, probable mannan synthase which consists of a 4-beta-mannosyltransferase activity on mannan using GDP-mannose. The beta-1,4-mannan product is the backbone for galactomannan synthesis by galactomannan galactosyltransferase. Galactomannan is a noncellulosic polysaccharides of plant cell wall. This Arabidopsis thaliana (Mouse-ear cress) protein is Probable glucomannan 4-beta-mannosyltransferase 14.